A 1098-amino-acid chain; its full sequence is Sister-chromatid cohesion protein 3 (1098 aa).

The segment at 1–68 is disordered; the sequence is MEDSPQGLKR…RSRTHPPQQN (68 aa). Positions 245-265 form a coiled coil; sequence RVDSLNKRLSVTHEQITTLED. Residues 275–360 form the SCD domain; the sequence is FVHRYRDIDN…QRFSNRMIEM (86 aa). Coiled coils occupy residues 632 to 653, 888 to 908, and 1009 to 1032; these read KLKDLEDELLDKITSAIREVKD, LESLKRAYHRYSSELSSGREE, and LETLEEKCLKNEDLQDDKEAANVR. The interval 1027–1077 is disordered; sequence EAANVRRRGRPRKRPETERKRLFDEQSGSDEDESISGGSDREDKLDEDAPL. Residues 1040-1050 are compositionally biased toward basic and acidic residues; that stretch reads RPETERKRLFD.

Belongs to the SCC3 family. In terms of assembly, part of the cohesin complex. Interacts with DEK3. In terms of tissue distribution, expressed in roots, mature leaves, buds and seedlings.

The protein localises to the nucleus. Its subcellular location is the chromosome. In terms of biological role, essential component of cohesin complex, a complex required for the cohesion of sister chromatids after DNA replication. The cohesin complex apparently forms a large proteinaceous ring within which sister chromatids can be trapped. At anaphase, the complex is cleaved and dissociates from chromatin, allowing sister chromatids to segregate. The cohesin complex may also play a role in spindle pole assembly during mitosis. Required for centromere cohesion maintenance at anaphase I and for the monopolar orientation of the kinetochores during both male and female meiosis. Also involved in mitosis. The sequence is that of Sister-chromatid cohesion protein 3 from Arabidopsis thaliana (Mouse-ear cress).